The sequence spans 131 residues: Small ribosomal subunit protein bS6 (131 aa).

Residues 98–131 (EASPMVKAKDERRERRDDFANETADDAEAGDSEE) are disordered. Residues 104-116 (KAKDERRERRDDF) show a composition bias toward basic and acidic residues. Over residues 120-131 (TADDAEAGDSEE) the composition is skewed to acidic residues.

Belongs to the bacterial ribosomal protein bS6 family.

Its function is as follows. Binds together with bS18 to 16S ribosomal RNA. This Salmonella dublin (strain CT_02021853) protein is Small ribosomal subunit protein bS6.